The primary structure comprises 114 residues: Large ribosomal subunit protein uL22 (114 aa).

It belongs to the universal ribosomal protein uL22 family. Part of the 50S ribosomal subunit.

Its function is as follows. This protein binds specifically to 23S rRNA; its binding is stimulated by other ribosomal proteins, e.g. L4, L17, and L20. It is important during the early stages of 50S assembly. It makes multiple contacts with different domains of the 23S rRNA in the assembled 50S subunit and ribosome. The globular domain of the protein is located near the polypeptide exit tunnel on the outside of the subunit, while an extended beta-hairpin is found that lines the wall of the exit tunnel in the center of the 70S ribosome. This chain is Large ribosomal subunit protein uL22, found in Ehrlichia ruminantium (strain Gardel).